A 342-amino-acid polypeptide reads, in one-letter code: Tetraacyldisaccharide 4'-kinase (342 aa).

56 to 63 serves as a coordination point for ATP; that stretch reads TAGGAGKT.

It belongs to the LpxK family.

It carries out the reaction a lipid A disaccharide + ATP = a lipid IVA + ADP + H(+). Its pathway is glycolipid biosynthesis; lipid IV(A) biosynthesis; lipid IV(A) from (3R)-3-hydroxytetradecanoyl-[acyl-carrier-protein] and UDP-N-acetyl-alpha-D-glucosamine: step 6/6. Its function is as follows. Transfers the gamma-phosphate of ATP to the 4'-position of a tetraacyldisaccharide 1-phosphate intermediate (termed DS-1-P) to form tetraacyldisaccharide 1,4'-bis-phosphate (lipid IVA). The polypeptide is Tetraacyldisaccharide 4'-kinase (Parvibaculum lavamentivorans (strain DS-1 / DSM 13023 / NCIMB 13966)).